We begin with the raw amino-acid sequence, 139 residues long: ATP synthase epsilon chain (139 aa).

The protein belongs to the ATPase epsilon chain family. In terms of assembly, F-type ATPases have 2 components, CF(1) - the catalytic core - and CF(0) - the membrane proton channel. CF(1) has five subunits: alpha(3), beta(3), gamma(1), delta(1), epsilon(1). CF(0) has three main subunits: a, b and c.

It localises to the cell membrane. Its function is as follows. Produces ATP from ADP in the presence of a proton gradient across the membrane. This is ATP synthase epsilon chain from Symbiobacterium thermophilum (strain DSM 24528 / JCM 14929 / IAM 14863 / T).